A 177-amino-acid polypeptide reads, in one-letter code: Ribulose bisphosphate carboxylase small subunit, chloroplastic 3 (177 aa).

The transit peptide at 1–56 (MASSMMASTAAAVARAGPAQSSMVPFNACRSSVPFPATRKANNNLSTLPGNGGRVS) directs the protein to the chloroplast.

This sequence belongs to the RuBisCO small chain family. Heterohexadecamer of 8 large and 8 small subunits.

It is found in the plastid. Its subcellular location is the chloroplast. RuBisCO catalyzes two reactions: the carboxylation of D-ribulose 1,5-bisphosphate, the primary event in carbon dioxide fixation, as well as the oxidative fragmentation of the pentose substrate. Both reactions occur simultaneously and in competition at the same active site. Although the small subunit is not catalytic it is essential for maximal activity. The sequence is that of Ribulose bisphosphate carboxylase small subunit, chloroplastic 3 from Lemna gibba (Swollen duckweed).